Reading from the N-terminus, the 665-residue chain is MEDIVDDVRSSTYQVVENDACGTGKANLLSLSLLYLRSTLKWMIELDAGEAVAIRFVPDPISGHYGDAEVFGAPLVAGSQERWYTFGNEAKFAISSWGGAEVEILGAASTEYMADEPSPTYTYCTNLHLNLERARIRAREQLRTDPSLQKILEDMDVSERTIPASYEQHGAGASGSDLYRAAGQGPRVMIVGPESAGKTSLIKFLANYALRSPALANVKEGDDASRRAKHRSEPEIHPGPDVAHDDDDDDDVENRKDDEESGINDMKHPKNRKKHSSADSQAKKTLSDITGWWPMIVALDPSEGAVPVPGCVSAIPLTPMPTNWLPSPSPALPYGITTQTTGTLPPSVSTVQSVMPISLWMGKENVRENERHSRRVIDWLAYYIEKRLVKDWRARMSGLLLDMPGVITADARTRYGFIQYCVRAFKIDTIVVLGHEKLNLELTRIYANDTSGHAPRIVKVPRSGGAVEVDEVYKQKLHDLQIRSYFYGMPPALTKEAAVTSMSMNDENTPASIPAGLDEHLGAVPTLSPYSTTIPLDLLSIYRVGQDRVAPSSALPIGAERVLSEMQVVKLDPVNSSNDMSMLLHSVLALVEPPPRNQSKDETSSPDDPGHHDYEDDELLGAAILGFVHVSDMDLHRKKLTVLSPKPGKLPSTTALIGNLQWQDM.

ATP contacts are provided by residues Lys-91 and Ser-195–Ser-200. Disordered regions lie at residues Val-218 to Lys-283 and Pro-593 to Glu-615. 2 stretches are compositionally biased toward basic and acidic residues: residues Lys-219–Pro-238 and Gln-598–Tyr-614.

The protein belongs to the Clp1 family. Clp1 subfamily. Component of a pre-mRNA cleavage factor complex. Interacts directly with PCF11.

It localises to the nucleus. Its function is as follows. Required for endonucleolytic cleavage during polyadenylation-dependent pre-mRNA 3'-end formation. This chain is mRNA cleavage and polyadenylation factor CLP1, found in Malassezia globosa (strain ATCC MYA-4612 / CBS 7966) (Dandruff-associated fungus).